The chain runs to 118 residues: MVHLTKTLRFINNPGFRKFYYGLQGYNKYGLYYDDFYDYTDPAHLEAVRRLPPDLYDQHTYRVIRASQLEITKQFLPKEQWPSYEEDMDKGRFLTPYLDEVMKEKKEKEEWVNFLSKD.

Residues 1–32 (MVHLTKTLRFINNPGFRKFYYGLQGYNKYGLY) are igE-binding. Immunodominant epitope; induces specific IgE antibody production in mice. Causes degranulation of rat basophilic leukemia (RBL) cells and the release of beta-hexosaminidase from them.

It belongs to the UQCRB/QCR7 family. As to quaternary structure, component of the ubiquinol-cytochrome c oxidoreductase (cytochrome b-c1 complex, complex III, CIII), a multisubunit enzyme composed of 3 respiratory subunits cytochrome b, cytochrome c1 and Rieske protein, 2 core protein subunits, and additional low-molecular weight protein subunits. The complex exists as an obligatory dimer and forms supercomplexes (SCs) in the inner mitochondrial membrane with cytochrome c oxidase (complex IV, CIV).

It is found in the mitochondrion inner membrane. In terms of biological role, component of the ubiquinol-cytochrome c oxidoreductase, a multisubunit transmembrane complex that is part of the mitochondrial electron transport chain which drives oxidative phosphorylation. The respiratory chain contains 3 multisubunit complexes succinate dehydrogenase (complex II, CII), ubiquinol-cytochrome c oxidoreductase (cytochrome b-c1 complex, complex III, CIII) and cytochrome c oxidase (complex IV, CIV), that cooperate to transfer electrons derived from NADH and succinate to molecular oxygen, creating an electrochemical gradient over the inner membrane that drives transmembrane transport and the ATP synthase. The cytochrome b-c1 complex catalyzes electron transfer from ubiquinol to cytochrome c, linking this redox reaction to translocation of protons across the mitochondrial inner membrane, with protons being carried across the membrane as hydrogens on the quinol. In the process called Q cycle, 2 protons are consumed from the matrix, 4 protons are released into the intermembrane space and 2 electrons are passed to cytochrome c. The sequence is that of Cytochrome b-c1 complex subunit 7 from Dermatophagoides pteronyssinus (European house dust mite).